The following is a 526-amino-acid chain: piRNA biogenesis factor prde-1 (526 aa).

The interval 436-526 is disordered; the sequence is EAKEEPIDKK…RRRGCEIRRK (91 aa). The span at 439–448 shows a compositional bias: basic and acidic residues; the sequence is EEPIDKKKDP. Positions 458–467 are enriched in basic residues; that stretch reads GKKRRGRKPK. A compositionally biased stretch (basic and acidic residues) spans 468–487; sequence KKDDPKMELKDEVKDLKDFV. The segment covering 489–498 has biased composition (low complexity); sequence EESTSASSSA.

Expressed in male and female germ cells.

The protein resides in the nucleus. Its subcellular location is the chromosome. Nuclear factor required for the production of piwi-interacting RNA (piRNA) precursors. Specifically required for piRNAs produced from loci associated with the Ruby motif. Promotes binding of the transcription factor snpc-4 at piRNA genomic clusters. Required for normal fertility. The polypeptide is piRNA biogenesis factor prde-1 (Caenorhabditis elegans).